The sequence spans 452 residues: UDP-N-acetylmuramoylalanine--D-glutamate ligase (452 aa).

Glycine 115 to threonine 121 is an ATP binding site.

The protein belongs to the MurCDEF family.

The protein resides in the cytoplasm. The catalysed reaction is UDP-N-acetyl-alpha-D-muramoyl-L-alanine + D-glutamate + ATP = UDP-N-acetyl-alpha-D-muramoyl-L-alanyl-D-glutamate + ADP + phosphate + H(+). The protein operates within cell wall biogenesis; peptidoglycan biosynthesis. In terms of biological role, cell wall formation. Catalyzes the addition of glutamate to the nucleotide precursor UDP-N-acetylmuramoyl-L-alanine (UMA). The polypeptide is UDP-N-acetylmuramoylalanine--D-glutamate ligase (Geobacter metallireducens (strain ATCC 53774 / DSM 7210 / GS-15)).